We begin with the raw amino-acid sequence, 172 residues long: Small ribosomal subunit protein uS5 (172 aa).

Residues 17-80 (LREKMISVNR…DEARRKMVKV (64 aa)) enclose the S5 DRBM domain.

Belongs to the universal ribosomal protein uS5 family. Part of the 30S ribosomal subunit. Contacts proteins S4 and S8.

Functionally, with S4 and S12 plays an important role in translational accuracy. Located at the back of the 30S subunit body where it stabilizes the conformation of the head with respect to the body. In Cupriavidus metallidurans (strain ATCC 43123 / DSM 2839 / NBRC 102507 / CH34) (Ralstonia metallidurans), this protein is Small ribosomal subunit protein uS5.